The primary structure comprises 1932 residues: DOCK-like protein 1 (1932 aa).

Residues 1410–1824 (LLEANRPELF…EIERYSRTLS (415 aa)) enclose the DOCKER domain. Positions 1908-1921 (STFLAGSQPNTNTD) are enriched in polar residues. Residues 1908–1932 (STFLAGSQPNTNTDSQHKHDYSHSG) are disordered. Positions 1922-1932 (SQHKHDYSHSG) are enriched in basic and acidic residues.

This sequence belongs to the DOCK family. In terms of assembly, forms an active heterodimer with LMO1.

The protein resides in the cytoplasm. It is found in the mitochondrion. In terms of biological role, forms a transiant heterodimeric complex with LMO1, that acts as a guanine nucleotide exchange factor exchange factor (GEF) for the small GTPase RHO5. DCK1, LMO1 and RHO5 relocate to mitochondria upon oxidative stress and trigger cell death. The DCK1/LMO1/RHO5 signaling module mediates mitochondrial turnover under nitrogen starvation conditions via mitophagy. The DCK1/LMO1/RHO5 signaling module plays also a function in cell wall integrity signaling. This is DOCK-like protein 1 from Saccharomyces cerevisiae (strain ATCC 204508 / S288c) (Baker's yeast).